A 507-amino-acid polypeptide reads, in one-letter code: Histidine ammonia-lyase (507 aa).

A cross-link (5-imidazolinone (Ala-Gly)) is located at residues 141-143; that stretch reads ASG. A 2,3-didehydroalanine (Ser) modification is found at serine 142.

The protein belongs to the PAL/histidase family. Contains an active site 4-methylidene-imidazol-5-one (MIO), which is formed autocatalytically by cyclization and dehydration of residues Ala-Ser-Gly.

It is found in the cytoplasm. It carries out the reaction L-histidine = trans-urocanate + NH4(+). Its pathway is amino-acid degradation; L-histidine degradation into L-glutamate; N-formimidoyl-L-glutamate from L-histidine: step 1/3. This Paraburkholderia phytofirmans (strain DSM 17436 / LMG 22146 / PsJN) (Burkholderia phytofirmans) protein is Histidine ammonia-lyase.